The primary structure comprises 1143 residues: MNYMHLGRAGTGKTTQLIERVIDQLTEQPLGPSIYFIVPDQMSFEMERRIATDPRLSGLVRMEVMSLRRFAFHMIRDYGNQVIPFLDETGTQLLLRQVVEEAEEELKIFKRTKNMPGFYKGLDELIASFKRSLVNPDMLRQISGASPERSPKLNDLALIYERFTERISDKALHADDYFTTLIELLPKADLSDVSVFVDGFYEFSLQEQQVLLRLMELTKDMHLSFTLDVEDVYTKQSEFGVSQRCYMQLIEQMKERQIAHEDIYYGQTVKFQSTGLRMLEQALLSPGYPPTDEEVTGVTVSAAVNRQVETEAAVRKAIQLVRHDGYRFKDIAFLVRHLEPYADHLERAFQLYDIPYFLDQRESMVHHPIVELVHAVLEIVMTGYREESVFRLLKTELIPLPAEDPRLALDRLETFVLERGIKGSMWKKPWQLKRRLADEISLTDAELQEELELNEWRQFLVEAIEPLEKRFKASKTMSEYTRALYRFLEEHHMTDRLTVWKQQALEVNELSQAREHDQVYEAVLLLFEQLEAAAPEATLTTELFVQMVETGLESLRFSLVPPSLDQVIATDYVRGRLQQVKVVFLLGANDGLIPLVEDQSKLLSEGDHDFLHDQGIPVGKASLDVFDDELYYLYQGVTAPSESLHISYALVDEDGKALQPASIVKQIKHQLLQDRPVKTYFAEAGDHAPDDQLQFVTSPERAAAAAAIELRRLQRRYPIQPSWFDVYNRLLENGRGRERMALFSNALFYQNQAEPLPEDLARNLYGDTIKASVSRFETYNACSYKHFARYGLRLKERKLYKFEAPDIGNLFHGALNDLSMNIKASGKRWRELDDQSCSNLAKEAVEKVTPEIQNAILMSSNRFGYIKKKLTDVVEQTAKMLVKQAERSEFEPDLFEISFGNAMFPPLRFTLPDGTEIEFTGRIDRVDQATIGDQLYVRIVDYKSSAKELDFAEIYYGLAIQMLLYLKTVVEQSEVLFNQQAKPAGALYFHVKNPMMRGDLSADEIERNQLLLESYQMQGVIVENDEVLRAMDQIAYDERKKSPLVKVTFTKTGLHKSHTKGVVKEEELTALMDHAWDELKTSSQSMYAGDIAIDPFDYQERTPCTFCEYRSVCQFDQSLGNDYRQLNPLSEKEVLERLKEETE.

The UvrD-like helicase ATP-binding domain occupies 1–274 (MNYMHLGRAG…YGQTVKFQST (274 aa)). Residue 7 to 14 (GRAGTGKT) participates in ATP binding. Residues 267–565 (QTVKFQSTGL…RFSLVPPSLD (299 aa)) enclose the UvrD-like helicase C-terminal domain. C782, C1104, C1107, and C1113 together coordinate [4Fe-4S] cluster.

Belongs to the helicase family. AddB/RexB type 1 subfamily. In terms of assembly, heterodimer of AddA and AddB. The cofactor is Mg(2+). It depends on [4Fe-4S] cluster as a cofactor.

Its function is as follows. The heterodimer acts as both an ATP-dependent DNA helicase and an ATP-dependent, dual-direction single-stranded exonuclease. Recognizes the chi site generating a DNA molecule suitable for the initiation of homologous recombination. The AddB subunit has 5' -&gt; 3' nuclease activity but not helicase activity. The protein is ATP-dependent helicase/deoxyribonuclease subunit B of Exiguobacterium sibiricum (strain DSM 17290 / CCUG 55495 / CIP 109462 / JCM 13490 / 255-15).